Consider the following 500-residue polypeptide: POU domain, class 3, transcription factor 3 (500 aa).

The segment covering 32-52 (GGGGGGGGGGGGAGGGGGGMQ) has biased composition (gly residues). Disordered regions lie at residues 32 to 63 (GGGG…SGAY), 122 to 190 (WSGS…WGAA), 231 to 319 (NGML…TPTS), and 461 to 500 (EKRM…TSVQ). Composition is skewed to pro residues over residues 134-146 (QQPP…PPQG) and 171-181 (HLGPPPPPPHQ). The segment covering 241–251 (GGGGGGAGGGA) has biased composition (gly residues). The segment covering 270–287 (HHHHHHHHAHPHPPHPHH) has biased composition (basic residues). Gly residues predominate over residues 293–303 (HHGGGGGGAGP). A POU-specific domain is found at 314–388 (EDTPTSDDLE…LLNKWLEEAD (75 aa)). The segment at residues 406–465 (KRKKRTSIEVSVKGALESHFLKCPKPSAQEITNLADSLQLEKEVVRVWFCNRRQKEKRMT) is a DNA-binding region (homeobox). Residues 468–486 (GIQQQTPDDVYSQVGTVSA) show a composition bias toward polar residues.

It belongs to the POU transcription factor family. Class-3 subfamily. Homodimer. Brain.

The protein localises to the nucleus. In terms of biological role, transcription factor that acts synergistically with SOX11 and SOX4. Plays a role in neuronal development. Is implicated in an enhancer activity at the embryonic met-mesencephalic junction; the enhancer element contains the octamer motif (5'-ATTTGCAT-3'). This chain is POU domain, class 3, transcription factor 3, found in Homo sapiens (Human).